The chain runs to 63 residues: Sec-independent protein translocase protein TatA (63 aa).

Residues 1 to 21 form a helical membrane-spanning segment; sequence MGSLSMWHWLIVLVIVLLLFG. Positions 43 to 63 are disordered; the sequence is MTDEDAPETAKTVDHKADETK. Positions 53 to 63 are enriched in basic and acidic residues; that stretch reads KTVDHKADETK.

It belongs to the TatA/E family. As to quaternary structure, the Tat system comprises two distinct complexes: a TatABC complex, containing multiple copies of TatA, TatB and TatC subunits, and a separate TatA complex, containing only TatA subunits. Substrates initially bind to the TatABC complex, which probably triggers association of the separate TatA complex to form the active translocon.

The protein resides in the cell inner membrane. Part of the twin-arginine translocation (Tat) system that transports large folded proteins containing a characteristic twin-arginine motif in their signal peptide across membranes. TatA could form the protein-conducting channel of the Tat system. The protein is Sec-independent protein translocase protein TatA of Rhizobium etli (strain ATCC 51251 / DSM 11541 / JCM 21823 / NBRC 15573 / CFN 42).